Reading from the N-terminus, the 267-residue chain is Neutrophil elastase (267 aa).

A signal peptide spans 1-27; that stretch reads MTLGRRLACLFLACVLPALLLGGTALA. The propeptide occupies 28 to 29; the sequence is SE. The Peptidase S1 domain maps to 30–247; sequence IVGGRRARPH…FVNWIDSIIQ (218 aa). Cysteines 55 and 71 form a disulfide. His-70 acts as the Charge relay system in catalysis. An N-linked (GlcNAc...) asparagine glycan is attached at Asn-88. Asp-117 (charge relay system) is an active-site residue. N-linked (GlcNAc...) asparagine glycosylation is found at Asn-124 and Asn-173. Cystine bridges form between Cys-151–Cys-208, Cys-181–Cys-187, and Cys-198–Cys-223. Ser-202 serves as the catalytic Charge relay system.

Belongs to the peptidase S1 family. Elastase subfamily. As to quaternary structure, interacts with NOTCH2NL. Interacts with agaphelin, an antihemostatic protein from Anopheles gambiae. In terms of tissue distribution, bone marrow cells. Neutrophil.

The protein resides in the cytoplasmic vesicle. Its subcellular location is the phagosome. The enzyme catalyses Hydrolysis of proteins, including elastin. Preferential cleavage: Val-|-Xaa &gt; Ala-|-Xaa.. Its function is as follows. Serine protease that modifies the functions of natural killer cells, monocytes and granulocytes. Inhibits C5a-dependent neutrophil enzyme release and chemotaxis. Promotes cleavage of GSDMB, thereby inhibiting pyroptosis. Promotes blood coagulation. Through the activation of the platelet fibrinogen receptor integrin alpha-IIb/beta-3, potentiates platelet aggregation induced by a threshold concentration of cathepsin G (CTSG). Cleaves and thus inactivates tissue factor pathway inhibitor (TFPI). Capable of killing E.coli but not S.aureus in vitro; digests outer membrane protein A (ompA) in E.coli and K.pneumoniae. The sequence is that of Neutrophil elastase (ELANE) from Homo sapiens (Human).